Here is a 266-residue protein sequence, read N- to C-terminus: Movement protein (266 aa).

Residues 212–227 (KTKKGKKRKKEKKKRV) are compositionally biased toward basic residues. A disordered region spans residues 212-266 (KTKKGKKRKKEKKKRVVGNSVNNKKINNSGKKGLKVEEIEDNVSDDESIASSSTF). Low complexity predominate over residues 228-242 (VGNSVNNKKINNSGK). Positions 249-259 (EIEDNVSDDES) are enriched in acidic residues.

Belongs to the tobamovirus movement protein family.

It localises to the host cytoplasm. It is found in the host cytoskeleton. Its subcellular location is the host cell junction. The protein resides in the host plasmodesma. In terms of biological role, transports viral genome to neighboring plant cells directly through plasmosdesmata, without any budding. The movement protein allows efficient cell to cell propagation, by bypassing the host cell wall barrier. Forms a ribonucleoprotein complex with viral RNA. Binds microtubules and modulates microtubule stability. Can bind double-stranded DNA. The sequence is that of Movement protein (MP) from Capsicum annuum (Capsicum pepper).